The sequence spans 61 residues: MKYTKFEKARIIGARALQIAMGAPVIIDVPKNIIDPVDIAMLEFENNVIPITIKKASKILN.

It belongs to the archaeal Rpo6/eukaryotic RPB6 RNA polymerase subunit family. As to quaternary structure, part of the RNA polymerase complex.

The protein localises to the cytoplasm. The enzyme catalyses RNA(n) + a ribonucleoside 5'-triphosphate = RNA(n+1) + diphosphate. Its function is as follows. DNA-dependent RNA polymerase (RNAP) catalyzes the transcription of DNA into RNA using the four ribonucleoside triphosphates as substrates. The polypeptide is DNA-directed RNA polymerase subunit Rpo6 (Thermoplasma acidophilum (strain ATCC 25905 / DSM 1728 / JCM 9062 / NBRC 15155 / AMRC-C165)).